Here is a 131-residue protein sequence, read N- to C-terminus: Sec-independent protein translocase protein TatB (131 aa).

A helical transmembrane segment spans residues 2–22 (FDGIGFMELLLIGILGLVVLG). Composition is skewed to polar residues over residues 68-83 (ESQGLKNLSPELQDSI) and 116-131 (AEKSTTTGANSDKPNG). Positions 68–131 (ESQGLKNLSP…TGANSDKPNG (64 aa)) are disordered.

Belongs to the TatB family. As to quaternary structure, the Tat system comprises two distinct complexes: a TatABC complex, containing multiple copies of TatA, TatB and TatC subunits, and a separate TatA complex, containing only TatA subunits. Substrates initially bind to the TatABC complex, which probably triggers association of the separate TatA complex to form the active translocon.

The protein resides in the cell inner membrane. In terms of biological role, part of the twin-arginine translocation (Tat) system that transports large folded proteins containing a characteristic twin-arginine motif in their signal peptide across membranes. Together with TatC, TatB is part of a receptor directly interacting with Tat signal peptides. TatB may form an oligomeric binding site that transiently accommodates folded Tat precursor proteins before their translocation. This is Sec-independent protein translocase protein TatB from Shewanella pealeana (strain ATCC 700345 / ANG-SQ1).